Reading from the N-terminus, the 301-residue chain is Ribosomal RNA small subunit methyltransferase H (301 aa).

S-adenosyl-L-methionine is bound by residues 31 to 33 (GGY), aspartate 49, phenylalanine 76, aspartate 97, and glutamine 104.

It belongs to the methyltransferase superfamily. RsmH family.

It localises to the cytoplasm. The catalysed reaction is cytidine(1402) in 16S rRNA + S-adenosyl-L-methionine = N(4)-methylcytidine(1402) in 16S rRNA + S-adenosyl-L-homocysteine + H(+). Functionally, specifically methylates the N4 position of cytidine in position 1402 (C1402) of 16S rRNA. The protein is Ribosomal RNA small subunit methyltransferase H of Ehrlichia ruminantium (strain Welgevonden).